The chain runs to 258 residues: Imidazole glycerol phosphate synthase subunit HisF (258 aa).

Active-site residues include D11 and D130.

This sequence belongs to the HisA/HisF family. Heterodimer of HisH and HisF.

Its subcellular location is the cytoplasm. The enzyme catalyses 5-[(5-phospho-1-deoxy-D-ribulos-1-ylimino)methylamino]-1-(5-phospho-beta-D-ribosyl)imidazole-4-carboxamide + L-glutamine = D-erythro-1-(imidazol-4-yl)glycerol 3-phosphate + 5-amino-1-(5-phospho-beta-D-ribosyl)imidazole-4-carboxamide + L-glutamate + H(+). It participates in amino-acid biosynthesis; L-histidine biosynthesis; L-histidine from 5-phospho-alpha-D-ribose 1-diphosphate: step 5/9. Functionally, IGPS catalyzes the conversion of PRFAR and glutamine to IGP, AICAR and glutamate. The HisF subunit catalyzes the cyclization activity that produces IGP and AICAR from PRFAR using the ammonia provided by the HisH subunit. The chain is Imidazole glycerol phosphate synthase subunit HisF from Xanthomonas campestris pv. campestris (strain B100).